Here is a 128-residue protein sequence, read N- to C-terminus: Gastrotropin (128 aa).

The residue at position 2 (alanine 2) is an N-acetylalanine.

Belongs to the calycin superfamily. Fatty-acid binding protein (FABP) family.

The protein localises to the cytoplasm. It is found in the membrane. Binds to bile acids and is involved in enterohepatic bile acid metabolism. Required for efficient apical to basolateral transport of conjugated bile acids in ileal enterocytes. Stimulates gastric acid and pepsinogen secretion. This is Gastrotropin (FABP6) from Bos taurus (Bovine).